Consider the following 158-residue polypeptide: Transcription elongation factor GreA (158 aa).

It belongs to the GreA/GreB family.

Functionally, necessary for efficient RNA polymerase transcription elongation past template-encoded arresting sites. The arresting sites in DNA have the property of trapping a certain fraction of elongating RNA polymerases that pass through, resulting in locked ternary complexes. Cleavage of the nascent transcript by cleavage factors such as GreA or GreB allows the resumption of elongation from the new 3'terminus. GreA releases sequences of 2 to 3 nucleotides. This is Transcription elongation factor GreA from Polaromonas naphthalenivorans (strain CJ2).